A 432-amino-acid chain; its full sequence is Probable exopolygalacturonase X (432 aa).

An N-terminal signal peptide occupies residues 1–23 (MKFSYSFVQVVTLLLSLSPSVEG). N-linked (GlcNAc...) asparagine glycans are attached at residues Asn113, Asn129, and Asn199. One copy of the PbH1 1 repeat lies at 231 to 252 (SDNIVIQNSVINNGDDCVSFKP). Residue Asp245 is the Proton donor of the active site. Residues Cys247 and Cys264 are joined by a disulfide bond. N-linked (GlcNAc...) asparagine glycosylation is found at Asn253 and Asn265. PbH1 repeat units lie at residues 254–274 (STNI…SVGS), 285–306 (VQNV…RIKV), and 327–348 (VKNV…EVTQ). His268 is a catalytic residue. 5 N-linked (GlcNAc...) asparagine glycosylation sites follow: Asn292, Asn297, Asn329, Asn354, and Asn364. Residues 362 to 394 (PSNLTISDIHFKNFRGTTSGKRDPNVGTIVCSS) form a PbH1 5 repeat. A disulfide bond links Cys392 and Cys398.

The protein belongs to the glycosyl hydrolase 28 family.

The protein resides in the secreted. It catalyses the reaction [(1-&gt;4)-alpha-D-galacturonosyl](n) + H2O = alpha-D-galacturonate + [(1-&gt;4)-alpha-D-galacturonosyl](n-1). Specific in hydrolyzing the terminal glycosidic bond of polygalacturonic acid and oligogalacturonates. The chain is Probable exopolygalacturonase X (pgaX) from Aspergillus fumigatus (strain CBS 144.89 / FGSC A1163 / CEA10) (Neosartorya fumigata).